The sequence spans 331 residues: WW domain-containing protein C2F3.14c (331 aa).

A disordered region spans residues 1–184; it reads MSSSKDCKAT…TNENQAQPSI (184 aa). Residues 9-22 show a composition bias toward polar residues; sequence ATSNVDQTIPASNV. Residues 23–41 are compositionally biased toward low complexity; the sequence is NSGDFISSNTSSSNSENSN. Residues 57-89 show a composition bias toward polar residues; the sequence is SFISENTPKNTFESTQTYENLESISKNEPTSEA. Residues 105-145 are compositionally biased toward pro residues; the sequence is REPPLPNEPVPEEPLPGEPPLPDEPVPEEPLPGEPPLPNEP. Residues 158-184 are compositionally biased toward polar residues; it reads SDETVSETSKNDTSNSPTNENQAQPSI. The WW domain occupies 187-220; it reads SEGHRIAAIWDPSQQAYYFWDTLTNTTSWNNPLE. The segment at 290–309 is disordered; that stretch reads YTRKEMEQMKRRTKEKKEMK. Positions 292-309 are enriched in basic and acidic residues; it reads RKEMEQMKRRTKEKKEMK.

The protein localises to the nucleus. This Schizosaccharomyces pombe (strain 972 / ATCC 24843) (Fission yeast) protein is WW domain-containing protein C2F3.14c.